Reading from the N-terminus, the 456-residue chain is CBL-interacting protein kinase 16 (456 aa).

A Protein kinase domain is found at 22 to 277 (YELGRLLGQG…IPEIMRTPWF (256 aa)). ATP is bound by residues 28-36 (LGQGTFAKV) and Lys51. Asp145 acts as the Proton acceptor in catalysis. Residues 163–192 (DFGLAALPEQLRQDGLLHTQCGTPAYVAPE) form an activation loop region. One can recognise an NAF domain in the interval 309–335 (AMSPRTCNAFQLISSMSSGFDLSGMFE). The interval 339–368 (KAATVFTSRAPAATVIQKLEAVGRSLGYSA) is PPI.

This sequence belongs to the protein kinase superfamily. CAMK Ser/Thr protein kinase family. SNF1 subfamily. The cofactor is Mn(2+).

The enzyme catalyses L-seryl-[protein] + ATP = O-phospho-L-seryl-[protein] + ADP + H(+). The catalysed reaction is L-threonyl-[protein] + ATP = O-phospho-L-threonyl-[protein] + ADP + H(+). In terms of biological role, CIPK serine-threonine protein kinases interact with CBL proteins. Binding of a CBL protein to the regulatory NAF domain of CIPK protein lead to the activation of the kinase in a calcium-dependent manner. This is CBL-interacting protein kinase 16 (CIPK16) from Oryza sativa subsp. japonica (Rice).